A 132-amino-acid chain; its full sequence is Small ribosomal subunit protein uS8 (132 aa).

Belongs to the universal ribosomal protein uS8 family. As to quaternary structure, part of the 30S ribosomal subunit. Contacts proteins S5 and S12.

Its function is as follows. One of the primary rRNA binding proteins, it binds directly to 16S rRNA central domain where it helps coordinate assembly of the platform of the 30S subunit. This is Small ribosomal subunit protein uS8 from Rickettsia conorii (strain ATCC VR-613 / Malish 7).